Consider the following 363-residue polypeptide: Peptide chain release factor 1 (363 aa).

N5-methylglutamine is present on glutamine 237. Basic and acidic residues predominate over residues 284-296 (EDEKRRSAEESTR). The tract at residues 284–306 (EDEKRRSAEESTRRSLVASGDRS) is disordered.

Belongs to the prokaryotic/mitochondrial release factor family. In terms of processing, methylated by PrmC. Methylation increases the termination efficiency of RF1.

It localises to the cytoplasm. Peptide chain release factor 1 directs the termination of translation in response to the peptide chain termination codons UAG and UAA. The polypeptide is Peptide chain release factor 1 (Shewanella oneidensis (strain ATCC 700550 / JCM 31522 / CIP 106686 / LMG 19005 / NCIMB 14063 / MR-1)).